The chain runs to 341 residues: L-threonine 3-dehydrogenase (341 aa).

Cys38 serves as a coordination point for Zn(2+). Active-site charge relay system residues include Thr40 and His43. Residues His63, Glu64, Cys93, Cys96, Cys99, and Cys107 each coordinate Zn(2+). Residues Ile175, Asp195, Arg200, Leu262–Ile264, and Ile286–Tyr287 each bind NAD(+).

It belongs to the zinc-containing alcohol dehydrogenase family. Homotetramer. Zn(2+) is required as a cofactor.

Its subcellular location is the cytoplasm. It carries out the reaction L-threonine + NAD(+) = (2S)-2-amino-3-oxobutanoate + NADH + H(+). Its pathway is amino-acid degradation; L-threonine degradation via oxydo-reductase pathway; glycine from L-threonine: step 1/2. Functionally, catalyzes the NAD(+)-dependent oxidation of L-threonine to 2-amino-3-ketobutyrate. This chain is L-threonine 3-dehydrogenase, found in Salmonella gallinarum (strain 287/91 / NCTC 13346).